A 398-amino-acid chain; its full sequence is Argininosuccinate synthase (398 aa).

An ATP-binding site is contributed by 8-16 (AYSGGLDTS). Y87 contacts L-citrulline. ATP is bound at residue G117. 3 residues coordinate L-aspartate: T119, N123, and D124. Residue N123 participates in L-citrulline binding. The L-citrulline site is built by R127, S175, E260, and Y272.

The protein belongs to the argininosuccinate synthase family. Type 1 subfamily. As to quaternary structure, homotetramer.

It is found in the cytoplasm. The enzyme catalyses L-citrulline + L-aspartate + ATP = 2-(N(omega)-L-arginino)succinate + AMP + diphosphate + H(+). The protein operates within amino-acid biosynthesis; L-arginine biosynthesis; L-arginine from L-ornithine and carbamoyl phosphate: step 2/3. The polypeptide is Argininosuccinate synthase (Mycobacterium ulcerans (strain Agy99)).